The sequence spans 308 residues: Probable manganese-dependent inorganic pyrophosphatase (308 aa).

6 residues coordinate Mn(2+): His9, Asp13, Asp15, Asp75, His97, and Asp149.

The protein belongs to the PPase class C family. It depends on Mn(2+) as a cofactor.

The protein resides in the cytoplasm. It catalyses the reaction diphosphate + H2O = 2 phosphate + H(+). This Listeria welshimeri serovar 6b (strain ATCC 35897 / DSM 20650 / CCUG 15529 / CIP 8149 / NCTC 11857 / SLCC 5334 / V8) protein is Probable manganese-dependent inorganic pyrophosphatase.